We begin with the raw amino-acid sequence, 317 residues long: Melanocyte-stimulating hormone receptor (317 aa).

Residues 1–37 (MPVQGSQRRLLGSLNSTPTATPHLGLAANQTGAWCLE) are Extracellular-facing. The N-linked (GlcNAc...) asparagine glycan is linked to Asn-29. Residues 38-63 (VSIPDGLFLSLGLVSLVENVLVVTAI) traverse the membrane as a helical segment. The Cytoplasmic segment spans residues 64 to 72 (AKNRNLHSP). Residues 73–93 (MYCFICCLALSDLLVSGSNML) form a helical membrane-spanning segment. The Extracellular portion of the chain corresponds to 94–118 (ETAVTLLLEAGALAARAAVVQQLDN). The chain crosses the membrane as a helical span at residues 119–140 (VIDVITCSSMLSSLCFLGAIAV). The Cytoplasmic portion of the chain corresponds to 141–163 (DRYISIFYALRYHSIVTLPRARR). The chain crosses the membrane as a helical span at residues 164–183 (AVAAIWVASVLFSMLFIAYY). The Extracellular portion of the chain corresponds to 184 to 191 (DHAAVLLC). A helical transmembrane segment spans residues 192–211 (LVVFFLAMLVLMAVLYVHML). The Cytoplasmic portion of the chain corresponds to 212 to 240 (ARACQHAQGIARLHKRQRPAHQGFGLKGA). Residues 241-266 (ATLTILLGIFFLCWGPFFLHLTLIVL) traverse the membrane as a helical segment. The Extracellular portion of the chain corresponds to 267–279 (CPQHPTCSCIFKN). The chain crosses the membrane as a helical span at residues 280-300 (FNLFLALIICNAIIDPLIYAF). Topologically, residues 301-317 (RSQELRRTLKEVLLCSW) are cytoplasmic. Residue Cys-315 is the site of S-palmitoyl cysteine attachment.

It belongs to the G-protein coupled receptor 1 family. In terms of assembly, interacts with MGRN1, but does not undergo MGRN1-mediated ubiquitination; this interaction competes with GNAS-binding and thus inhibits agonist-induced cAMP production. Interacts with OPN3; the interaction results in a decrease in MC1R-mediated cAMP signaling and ultimately a decrease in melanin production in melanocytes.

The protein localises to the cell membrane. Its function is as follows. Receptor for MSH (alpha, beta and gamma) and ACTH. The activity of this receptor is mediated by G proteins which activate adenylate cyclase. Mediates melanogenesis, the production of eumelanin (black/brown) and phaeomelanin (red/yellow), via regulation of cAMP signaling in melanocytes. This chain is Melanocyte-stimulating hormone receptor (MC1R), found in Allenopithecus nigroviridis (Allen's swamp monkey).